Consider the following 128-residue polypeptide: Translation initiation factor 5A (128 aa).

Position 35 is a hypusine (K35).

Belongs to the eIF-5A family.

Its subcellular location is the cytoplasm. Functions by promoting the formation of the first peptide bond. This Methanocella arvoryzae (strain DSM 22066 / NBRC 105507 / MRE50) protein is Translation initiation factor 5A (eIF5A).